We begin with the raw amino-acid sequence, 223 residues long: Pre-mRNA-splicing factor SPF27 (223 aa).

Residues 139-223 are a coiled coil; it reads NENLLHMIDC…GENKENIEDY (85 aa).

The protein belongs to the SPF27 family. Component of the pre-catalytic and catalytic spliceosome complexes. Component of the postcatalytic spliceosome P complex.

Its subcellular location is the nucleus. Functionally, required for pre-mRNA splicing as component of the activated spliceosome. May have a scaffolding role in the spliceosome assembly as it contacts all other components of the core complex. The chain is Pre-mRNA-splicing factor SPF27 (bcas2) from Xenopus tropicalis (Western clawed frog).